Consider the following 197-residue polypeptide: Dephospho-CoA kinase (197 aa).

The DPCK domain occupies 2–197 (IIGITGGIAS…SALLSLANPR (196 aa)). 10-15 (ASGKST) contributes to the ATP binding site.

The protein belongs to the CoaE family.

Its subcellular location is the cytoplasm. It catalyses the reaction 3'-dephospho-CoA + ATP = ADP + CoA + H(+). Its pathway is cofactor biosynthesis; coenzyme A biosynthesis; CoA from (R)-pantothenate: step 5/5. Catalyzes the phosphorylation of the 3'-hydroxyl group of dephosphocoenzyme A to form coenzyme A. This Streptococcus pyogenes serotype M28 (strain MGAS6180) protein is Dephospho-CoA kinase.